We begin with the raw amino-acid sequence, 436 residues long: Glutamyl-tRNA reductase (436 aa).

Residues Thr49 to Arg52, Ser109, Glu114 to Gln116, and Gln120 each bind substrate. Catalysis depends on Cys50, which acts as the Nucleophile. Gly198–Ser203 lines the NADP(+) pocket.

This sequence belongs to the glutamyl-tRNA reductase family. Homodimer.

It catalyses the reaction (S)-4-amino-5-oxopentanoate + tRNA(Glu) + NADP(+) = L-glutamyl-tRNA(Glu) + NADPH + H(+). Its pathway is porphyrin-containing compound metabolism; protoporphyrin-IX biosynthesis; 5-aminolevulinate from L-glutamyl-tRNA(Glu): step 1/2. It participates in porphyrin-containing compound metabolism; chlorophyll biosynthesis. In terms of biological role, catalyzes the NADPH-dependent reduction of glutamyl-tRNA(Glu) to glutamate 1-semialdehyde (GSA). The chain is Glutamyl-tRNA reductase from Prochlorococcus marinus (strain AS9601).